Here is a 234-residue protein sequence, read N- to C-terminus: Putative B3 domain-containing protein At2g18810 (234 aa).

The segment at Cys55–Lys88 is disordered. Residues Pro60–Ser72 are compositionally biased toward polar residues. A DNA-binding region (TF-B3) is located at residues Asn87 to Asp185.

The protein resides in the nucleus. The polypeptide is Putative B3 domain-containing protein At2g18810 (Arabidopsis thaliana (Mouse-ear cress)).